Reading from the N-terminus, the 62-residue chain is Large ribosomal subunit protein eL37 (62 aa).

Zn(2+) contacts are provided by C20, C23, C35, and C38. The C4-type zinc finger occupies 20–38 (CRRCGRHAFNVAKGYCAAC).

It belongs to the eukaryotic ribosomal protein eL37 family. Zn(2+) serves as cofactor.

Its function is as follows. Binds to the 23S rRNA. This Staphylothermus marinus (strain ATCC 43588 / DSM 3639 / JCM 9404 / F1) protein is Large ribosomal subunit protein eL37.